Reading from the N-terminus, the 320-residue chain is Olfactory receptor 12D1 (320 aa).

Over 1–23 the chain is Extracellular; the sequence is MLNTTSVTEFLLLGVTDIQELQP. Asn3 carries an N-linked (GlcNAc...) asparagine glycan. Residues 24 to 44 traverse the membrane as a helical segment; the sequence is FLFVVFLTIYFISVAGNGAIL. Residues 45 to 55 are Cytoplasmic-facing; that stretch reads MIVISDPRLHS. Residues 56–76 traverse the membrane as a helical segment; the sequence is PMYFFLGNLSCLDICYSSVTL. The Extracellular segment spans residues 77–97; that stretch reads PKMLQNFLSAHKAISFLGCIS. A disulfide bond links Cys95 and Cys177. The chain crosses the membrane as a helical span at residues 98-118; sequence QLHFFHFLGSTEAMLLAVMAF. Residues 119–141 are Cytoplasmic-facing; that stretch reads DRFVAICKPLRYTVIMNPQLCTQ. Residues 142–162 form a helical membrane-spanning segment; it reads MAITIWMIGFFHALLHSLMTS. At 163–203 the chain is on the extracellular side; the sequence is RLNFCGSNRIYHFFCDVKPLLKLACGNTELNQWLLSTVTGT. The helical transmembrane segment at 204–224 threads the bilayer; sequence IAMGPFFLTLLSYFYIITHLF. Residues 225-238 lie on the Cytoplasmic side of the membrane; the sequence is FKTHSFSMLRKALS. A helical membrane pass occupies residues 239 to 259; that stretch reads TCASHFMVVILLYAPVLFTYI. Topologically, residues 260 to 270 are extracellular; it reads HHASGTSMDQD. Residues 271-291 traverse the membrane as a helical segment; the sequence is RITAIMYTVVTPVLNPLIYTL. Residues 292–320 lie on the Cytoplasmic side of the membrane; sequence RNKEVKGAFNRAMKRWLWPKEILKNSSEA.

The protein belongs to the G-protein coupled receptor 1 family.

It localises to the cell membrane. In terms of biological role, odorant receptor. In Homo sapiens (Human), this protein is Olfactory receptor 12D1 (OR12D1).